We begin with the raw amino-acid sequence, 1233 residues long: MAIDVNKFESMQIGLASPAKIREWSYGEVKKPETINYRTLKAERDGLFDERIFGPIKDYECACGKYKRIRYKGIVCDRCGVEVTSSKVRRERMGHIELAAPVTHIWYFKGIPSRMGLILDMSPRSLEEIIYFASYVVINPGNTPLEKKQLITEAEYRQYQDQYGTDTFDAKMGAEAIKELLAEVDLEKQAKELKNELKDATGQKRTRAVRRLDIVEAFIQSGNKPEWMVMDVVPVIPPDLRPMVQLEGGRFATSDLNDLYRRVINRNNRLKRLLDLNAPGIIVQNEKRMLQEAVDALIDNGRRGRPVSGPGNRPLKSLSHLLKGKQGRFRQNLLGKRVDYSGRSVIDVGPFLKMNQMGLPRQMAVELFKPFIYNRLIELGTENGGANNLRSARCLVERHEDVVQDVLEEVVKEHPVLLNRAPTLHRLGIQAFEPVLVSGKAMRLHPLVTTAYNADFDGDQMAIHVPLSDEAQAEARLLMLAASHILAPKDGKPIVAPSQDMTIGNYYLTTEEAGIKGEGMIFSSADEVKMALQNHEVELHTRIGIAASSFDKAKPFTDHQRARIMVTTVGKVIFNEILPDDFPYINEPKSENFNGIDDRFFLDPGTDIVGWFKNESLNGPFKSGFLSDIIAQIYARYQVTRTSVLLDDMKDLGYDISTRSGLTVAMSDVTELPEKGEVLKEAHEKVAKITKQFRRGLLTDDERYIQVTQTWSDAQDKIKSMLIASFDSKNPIFMMSDSGARGNISNFVQLAGMRGLMAAPNGKVIELPVTANFREGLSVLEMFISTHGARKGMTDTALKTANSGYLTRRLVDVAQEVIVREEDCGTDRGLDVSAIMDGNEVIEPLYDRILGRYAMKPVIDPKTGEVIAKKNQMIDEHVADQIIDAGIQTVTIRSIFTCRTEHGVCVKCYGRNMATGDIVEVGEAVGTVAAQSIGEPGTQLTMRTFHTGGVALSEDITQGLPRVQEIFEARNPKGRAEISEVTGKVTSIEENPADRTKTVTIEGETDTREYVLPISARLRVAEGDEIHRSEAINEGPLDPKELIKVSSTLKTENYMLAEVQKVYRMQGVGIADKHVEVMVRQMLRKVRVMDPGQTDLLPGELLDIADFRRANAKTILSGQTAATSRPVLLGITKASLETNSFLSAASFQETTRVLTDAAIRGKNDPLVGLKENVIIGKVIPAGTGVAEYRHIKDEVVAAPVEPLEKIPTLDELQKAFDKEPASSTGNKASNSAK.

Residues Cys-61, Cys-63, Cys-76, and Cys-79 each contribute to the Zn(2+) site. Mg(2+) is bound by residues Asp-455, Asp-457, and Asp-459. Zn(2+)-binding residues include Cys-824, Cys-898, Cys-905, and Cys-908. The span at Glu-1211–Pro-1220 shows a compositional bias: basic and acidic residues. Residues Glu-1211–Lys-1233 form a disordered region. The segment covering Ala-1221–Lys-1233 has biased composition (polar residues).

It belongs to the RNA polymerase beta' chain family. In terms of assembly, the RNAP catalytic core consists of 2 alpha, 1 beta, 1 beta' and 1 omega subunit. When a sigma factor is associated with the core the holoenzyme is formed, which can initiate transcription. Requires Mg(2+) as cofactor. Zn(2+) is required as a cofactor.

It carries out the reaction RNA(n) + a ribonucleoside 5'-triphosphate = RNA(n+1) + diphosphate. Functionally, DNA-dependent RNA polymerase catalyzes the transcription of DNA into RNA using the four ribonucleoside triphosphates as substrates. This chain is DNA-directed RNA polymerase subunit beta', found in Oenococcus oeni (strain ATCC BAA-331 / PSU-1).